The following is a 55-amino-acid chain: MAKGAREKIKLVSTANTGHFYTTDKNKRNMPGKMEIKKFDPVVRQHVLYKEAKIK.

It belongs to the bacterial ribosomal protein bL33 family.

The protein is Large ribosomal subunit protein bL33 of Aliivibrio salmonicida (strain LFI1238) (Vibrio salmonicida (strain LFI1238)).